The chain runs to 490 residues: Ribulose bisphosphate carboxylase large chain (490 aa).

Positions 127 and 177 each coordinate substrate. Catalysis depends on lysine 179, which acts as the Proton acceptor. Lysine 181 contacts substrate. Mg(2+)-binding residues include lysine 205, aspartate 207, and glutamate 208. An N6-carboxylysine modification is found at lysine 205. Residue histidine 297 is the Proton acceptor of the active site. 3 residues coordinate substrate: arginine 298, histidine 330, and serine 382.

This sequence belongs to the RuBisCO large chain family. Type I subfamily. As to quaternary structure, heterohexadecamer of 8 large chains and 8 small chains. Mg(2+) is required as a cofactor.

The protein localises to the plastid. Its subcellular location is the chloroplast. The catalysed reaction is 2 (2R)-3-phosphoglycerate + 2 H(+) = D-ribulose 1,5-bisphosphate + CO2 + H2O. The enzyme catalyses D-ribulose 1,5-bisphosphate + O2 = 2-phosphoglycolate + (2R)-3-phosphoglycerate + 2 H(+). Functionally, ruBisCO catalyzes two reactions: the carboxylation of D-ribulose 1,5-bisphosphate, the primary event in carbon dioxide fixation, as well as the oxidative fragmentation of the pentose substrate in the photorespiration process. Both reactions occur simultaneously and in competition at the same active site. The protein is Ribulose bisphosphate carboxylase large chain of Detonula confervacea (Marine diatom).